Consider the following 395-residue polypeptide: MNQPWRTHLQTKLKQLHEQGQYRNLHVTEQAEETWLIRDEKRMLNLASNNYLGLAGDERLKEAAIVCTRKYGTGATASRLVVGNYSLYEEVERSICNWKGTEKALVVNSGFTANVGAISSLACRHDIVFSDKLNHASIVDGIILSGAEHKRYRHNDLNHLEALLKTASPEKRKLIVTDTVFSMDGDTAHLRELVQLKEKYGAIIIVDEAHASGIYGIGGAGLSHIEKDLAQKIDIHMGTFSKALGCYGAYLTGDAIYIEYLQNMMRSFIFTTALPPSTLGAVQKAIEIVQEDHKRRENLIANGEYFRSKLREAGFNIGNSSTHIVPIVVGSNENTLRFSKRLQEAGIAAIAIRPPTVPVHSSRIRFAVTSQHTIADLKWAIDRITHIAKEEELFV.

A substrate-binding site is contributed by Arg23. 110-111 (GF) serves as a coordination point for pyridoxal 5'-phosphate. Residue His135 participates in substrate binding. Pyridoxal 5'-phosphate-binding positions include Ser182, 207–210 (DEAH), and 239–242 (TFSK). An N6-(pyridoxal phosphate)lysine modification is found at Lys242. Thr356 is a binding site for substrate.

Belongs to the class-II pyridoxal-phosphate-dependent aminotransferase family. BioF subfamily. In terms of assembly, homodimer. The cofactor is pyridoxal 5'-phosphate.

The enzyme catalyses 6-carboxyhexanoyl-[ACP] + L-alanine + H(+) = (8S)-8-amino-7-oxononanoate + holo-[ACP] + CO2. It participates in cofactor biosynthesis; biotin biosynthesis. Its function is as follows. Catalyzes the decarboxylative condensation of pimeloyl-[acyl-carrier protein] and L-alanine to produce 8-amino-7-oxononanoate (AON), [acyl-carrier protein], and carbon dioxide. The sequence is that of Putative 8-amino-7-oxononanoate synthase (bioF) from Bacillus anthracis.